We begin with the raw amino-acid sequence, 494 residues long: Neuronal pentraxin receptor (494 aa).

Residues 1–2 (MK) lie on the Cytoplasmic side of the membrane. A helical; Signal-anchor for type II membrane protein transmembrane segment spans residues 3-23 (FLAVLLAAGMLAFLGAVICII). Residues 24-494 (ASVPLAASPA…FDVCKRRAKA (471 aa)) lie on the Extracellular side of the membrane. Residues 37–80 (PGGTDNASAASAAGAPGPQRSLSALQGAGGSAGPSVLPGEPAAS) form a disordered region. The N-linked (GlcNAc...) asparagine glycan is linked to asparagine 42. Low complexity-rich tracts occupy residues 43–62 (ASAA…SALQ) and 69–80 (GPSVLPGEPAAS). An N-linked (GlcNAc...) asparagine glycan is attached at asparagine 211. One can recognise a Pentraxin (PTX) domain in the interval 286–488 (DAFKVSIPIR…GAKKAAFDVC (203 aa)). A disulfide bridge links cysteine 316 with cysteine 377. Asparagine 341, glutamate 419, glutamine 420, aspartate 421, and glutamine 431 together coordinate Ca(2+). Asparagine 457 carries an N-linked (GlcNAc...) asparagine glycan.

As to quaternary structure, interacts with KLHL2. Heteropentamer with NPTX1 and/or NPTX2. Also binds taipoxin-associated calcium-binding protein 49 (TCBP49/RCN2). Ca(2+) serves as cofactor. Post-translationally, N-glycosylated. In terms of processing, ubiquitinated by a cullin-RING-based BCR (BTB-CUL3-RBX1) E3 ubiquitin-protein ligase complex containing KLHL2. In terms of tissue distribution, brain specific.

The protein localises to the membrane. In terms of biological role, may be involved in mediating uptake of synaptic material during synapse remodeling or in mediating the synaptic clustering of AMPA glutamate receptors at a subset of excitatory synapses. This Rattus norvegicus (Rat) protein is Neuronal pentraxin receptor (Nptxr).